A 292-amino-acid polypeptide reads, in one-letter code: Sulfofructosephosphate aldolase (292 aa).

Lys-193 (schiff-base intermediate with substrate) is an active-site residue.

This sequence belongs to the aldolase LacD family. As to quaternary structure, homotetramer.

The catalysed reaction is 6-deoxy-6-sulfo-D-fructose 1-phosphate = (2S)-3-sulfolactaldehyde + dihydroxyacetone phosphate. Cleaves 6-deoxy-6-sulfo-D-fructose 1-phosphate (SFP) to form dihydroxyacetone phosphate (DHAP) and 3-sulfolactaldehyde (SLA). This chain is Sulfofructosephosphate aldolase (yihT), found in Salmonella typhi.